The chain runs to 449 residues: MLNYTGLENKNVLVVGLAKSGYEAAKLLSKLGANVTVNDGKDLSQDAHAKDLESMGISVVSGSHPLTLLDKNPIIVKNPGIPYTVSIIDEAVKRGLKILTEVELSYLISEAPIIAVTGTNGKTTVTSLIGDMFKKSRLTGRLSGNIGYVASKVAQEVKPTDYLVTELSSFQLLGIEKYKPHIAIITNIYSAHLDYHENLENYQNAKKQIYKNQTEEDYLICNYHQRQVIESEELKAKTLYFSTQQEVDGIYIKDGFIVYKGVRIINTEDLVLPGEHNLENILAAVLACILAGVPIKAIIDSLTTFSGIEHRLQYVGTNRTNKYYNDSKATNTLATQFALNSFNQPIIWLCGGLDRGNEFDELIPYMENVRAMVVFGQTKAKFAKLGNSQGKSVIEANNVEDAVDKVQDIIEPNDVVLLSPACASWDQYSTFEERGEKFIERFRAHLPSY.

ATP is bound at residue 118 to 124 (GTNGKTT).

This sequence belongs to the MurCDEF family.

The protein localises to the cytoplasm. It carries out the reaction UDP-N-acetyl-alpha-D-muramoyl-L-alanine + D-glutamate + ATP = UDP-N-acetyl-alpha-D-muramoyl-L-alanyl-D-glutamate + ADP + phosphate + H(+). It functions in the pathway cell wall biogenesis; peptidoglycan biosynthesis. Its function is as follows. Cell wall formation. Catalyzes the addition of glutamate to the nucleotide precursor UDP-N-acetylmuramoyl-L-alanine (UMA). The polypeptide is UDP-N-acetylmuramoylalanine--D-glutamate ligase (Staphylococcus aureus (strain MRSA252)).